A 199-amino-acid polypeptide reads, in one-letter code: Nucleoside triphosphate pyrophosphatase (199 aa).

The active-site Proton acceptor is aspartate 76.

Belongs to the Maf family. The cofactor is a divalent metal cation.

Its subcellular location is the cytoplasm. It carries out the reaction a ribonucleoside 5'-triphosphate + H2O = a ribonucleoside 5'-phosphate + diphosphate + H(+). The catalysed reaction is a 2'-deoxyribonucleoside 5'-triphosphate + H2O = a 2'-deoxyribonucleoside 5'-phosphate + diphosphate + H(+). Functionally, nucleoside triphosphate pyrophosphatase. May have a dual role in cell division arrest and in preventing the incorporation of modified nucleotides into cellular nucleic acids. The sequence is that of Nucleoside triphosphate pyrophosphatase from Roseobacter denitrificans (strain ATCC 33942 / OCh 114) (Erythrobacter sp. (strain OCh 114)).